Consider the following 67-residue polypeptide: Large ribosomal subunit protein bL35 (67 aa).

Residues 1 to 20 form a disordered region; that stretch reads MPKLKTKSGAKKRFVPKKSG.

The protein belongs to the bacterial ribosomal protein bL35 family.

The protein is Large ribosomal subunit protein bL35 of Anaeromyxobacter dehalogenans (strain 2CP-C).